The sequence spans 206 residues: LexA repressor (206 aa).

Positions 28–48 (RAEIATRLGFKSANAAEEHLK) form a DNA-binding region, H-T-H motif. Residues S123 and K160 each act as for autocatalytic cleavage activity in the active site.

Belongs to the peptidase S24 family. Homodimer.

It catalyses the reaction Hydrolysis of Ala-|-Gly bond in repressor LexA.. In terms of biological role, represses a number of genes involved in the response to DNA damage (SOS response), including recA and lexA. In the presence of single-stranded DNA, RecA interacts with LexA causing an autocatalytic cleavage which disrupts the DNA-binding part of LexA, leading to derepression of the SOS regulon and eventually DNA repair. This is LexA repressor from Shewanella putrefaciens (strain CN-32 / ATCC BAA-453).